The chain runs to 283 residues: Probable endonuclease 4 (283 aa).

Zn(2+) is bound by residues His66, His106, Glu141, Asp174, His177, His211, Asp224, His226, and Glu256.

The protein belongs to the AP endonuclease 2 family. Zn(2+) is required as a cofactor.

The catalysed reaction is Endonucleolytic cleavage to 5'-phosphooligonucleotide end-products.. Functionally, endonuclease IV plays a role in DNA repair. It cleaves phosphodiester bonds at apurinic or apyrimidinic (AP) sites, generating a 3'-hydroxyl group and a 5'-terminal sugar phosphate. This is Probable endonuclease 4 from Carboxydothermus hydrogenoformans (strain ATCC BAA-161 / DSM 6008 / Z-2901).